A 124-amino-acid chain; its full sequence is Calvin cycle protein CP12-1, chloroplastic (124 aa).

The transit peptide at 1-47 directs the protein to the chloroplast; sequence MTTIAAAGLNVATPRVVVRPVARVLGPVRLNYPWKFGSMKRMVVVKA. Intrachain disulfides connect Cys68–Cys77 and Cys110–Cys119. The segment at 90–124 is disordered; it reads AASHARDKKKAGGSDPLEEYCNDNPETDECRTYDN. A compositionally biased stretch (acidic residues) spans 105–116; the sequence is PLEEYCNDNPET.

This sequence belongs to the CP12 family. As to quaternary structure, monomer. Component of a complex that contains two dimers of PRK, two tetramers of GAPDH and CP12. CP12 associates with GAPDH, causing its conformation to change. This GAPDH/CP12 complex binds PRK to form a half-complex (one unit). This unit probably dimerizes due partially to interactions between the enzymes of each unit. In terms of processing, contains two disulfide bonds; only the oxidized protein, with two disulfide bonds, is active in complex formation. The C-terminal disulfide is involved in the interaction with GAPDH and the N-terminal disulfide mediates the binding of PRK with this binary complex. As to expression, mostly expressed in flowers, hypocotyl, cotyledons, leaves, stems, and flower stalks. Barely detectable in roots and siliques. Present in root tips and lateral roots. Accumulates in the cotyledons of etiolated seedlings.

The protein resides in the plastid. It localises to the chloroplast. Its function is as follows. Acts as a linker essential in the assembly of a core complex of PRK/GAPDH. Coordinates the reversible inactivation of chloroplast enzymes GAPDH and PRK during darkness in photosynthetic tissues. This chain is Calvin cycle protein CP12-1, chloroplastic (CP12-1), found in Arabidopsis thaliana (Mouse-ear cress).